The primary structure comprises 484 residues: Keratin, type I cytoskeletal 14 (484 aa).

Residues 1–20 (MATCSRQFTSSSSMKGSCGI) are disordered. The tract at residues 1-120 (MATCSRQFTS…GIGDGLLVGS (120 aa)) is head. A coil 1A region spans residues 121–156 (EKVTMQNLNDRLATYLDKVRALEEANTELEVKIRDW). Residues 121–432 (EKVTMQNLND…RLLEGEDAHL (312 aa)) form the IF rod domain. The linker 1 stretch occupies residues 157–174 (YQRQRPTEIKDYSPYFKT). Positions 175–266 (IEDLKSKILA…KNHEEEMASM (92 aa)) are coil 1B. The segment at 267–289 (RGQVGGDVNVEMDAAPGVDLSRI) is linker 12. Residues 290–428 (LNEMRDQYEK…ATYRRLLEGE (139 aa)) are coil 2. Positions 429-484 (DAHLSSSQFSSSSQFSSGSQSSRDVTSTNRQIRTKVMDVHDGKVVSTHEQVLRTKN) are tail. Residues 431 to 484 (HLSSSQFSSSSQFSSGSQSSRDVTSTNRQIRTKVMDVHDGKVVSTHEQVLRTKN) form an interaction with Type I keratins and keratin filaments region. The span at 435–450 (SQFSSSSQFSSGSQSS) shows a compositional bias: low complexity. The tract at residues 435-457 (SQFSSSSQFSSGSQSSRDVTSTN) is disordered. Phosphoserine is present on Ser-447.

This sequence belongs to the intermediate filament family. In terms of assembly, heterotetramer of two type I and two type II keratins. Forms a disulfide-linked heterodimer (via 2B domains) with KRT5 (via 2B domains). Forms a heterodimer with KRT1; the interaction is more abundant in the absence of KRT5. Interacts with PLEC isoform 1C, when in a heterodimer with KRT5. Interacts with TRADD and with keratin filaments. Associates with other type I keratins. Interacts with EPPK1. Interacts with KLHL24. Interacts with PKP1 (via N-terminus) and PKP2. In terms of processing, a disulfide bond is formed between rather than within filaments and promotes the formation of a keratin filament cage around the nucleus. Ubiquitinated by the BCR(KLHL24) E3 ubiquitin ligase complex. Expressed in the corneal epithelium (at protein level). Expressed in the basal layer of the epidermis and the outer root sheath of hair follicles (at protein level). Expressed in the epithelial basal layer in the tail epidermis. Expressed in the parabasal cell row, basal cell layer, and suprabasal epithelial layer of the tongue.

The protein resides in the cytoplasm. It localises to the nucleus. Its function is as follows. The nonhelical tail domain is involved in promoting KRT5-KRT14 filaments to self-organize into large bundles and enhances the mechanical properties involved in resilience of keratin intermediate filaments in vitro. The protein is Keratin, type I cytoskeletal 14 (Krt14) of Mus musculus (Mouse).